The sequence spans 278 residues: 4-hydroxy-3-methylbut-2-enyl diphosphate reductase (278 aa).

C12 lines the [4Fe-4S] cluster pocket. (2E)-4-hydroxy-3-methylbut-2-enyl diphosphate contacts are provided by H40 and H75. H40 and H75 together coordinate dimethylallyl diphosphate. Residues H40 and H75 each contribute to the isopentenyl diphosphate site. A [4Fe-4S] cluster-binding site is contributed by C97. Residue H125 participates in (2E)-4-hydroxy-3-methylbut-2-enyl diphosphate binding. H125 is a binding site for dimethylallyl diphosphate. H125 is a binding site for isopentenyl diphosphate. The Proton donor role is filled by E127. T157 provides a ligand contact to (2E)-4-hydroxy-3-methylbut-2-enyl diphosphate. C187 is a binding site for [4Fe-4S] cluster. (2E)-4-hydroxy-3-methylbut-2-enyl diphosphate is bound by residues S215, S216, N217, and S258. Residues S215, S216, N217, and S258 each contribute to the dimethylallyl diphosphate site. Isopentenyl diphosphate-binding residues include S215, S216, N217, and S258.

It belongs to the IspH family. Requires [4Fe-4S] cluster as cofactor.

The catalysed reaction is isopentenyl diphosphate + 2 oxidized [2Fe-2S]-[ferredoxin] + H2O = (2E)-4-hydroxy-3-methylbut-2-enyl diphosphate + 2 reduced [2Fe-2S]-[ferredoxin] + 2 H(+). It carries out the reaction dimethylallyl diphosphate + 2 oxidized [2Fe-2S]-[ferredoxin] + H2O = (2E)-4-hydroxy-3-methylbut-2-enyl diphosphate + 2 reduced [2Fe-2S]-[ferredoxin] + 2 H(+). It functions in the pathway isoprenoid biosynthesis; dimethylallyl diphosphate biosynthesis; dimethylallyl diphosphate from (2E)-4-hydroxy-3-methylbutenyl diphosphate: step 1/1. Its pathway is isoprenoid biosynthesis; isopentenyl diphosphate biosynthesis via DXP pathway; isopentenyl diphosphate from 1-deoxy-D-xylulose 5-phosphate: step 6/6. Catalyzes the conversion of 1-hydroxy-2-methyl-2-(E)-butenyl 4-diphosphate (HMBPP) into a mixture of isopentenyl diphosphate (IPP) and dimethylallyl diphosphate (DMAPP). Acts in the terminal step of the DOXP/MEP pathway for isoprenoid precursor biosynthesis. The protein is 4-hydroxy-3-methylbut-2-enyl diphosphate reductase of Pseudothermotoga lettingae (strain ATCC BAA-301 / DSM 14385 / NBRC 107922 / TMO) (Thermotoga lettingae).